Consider the following 447-residue polypeptide: Xylose isomerase (447 aa).

Catalysis depends on residues histidine 102 and aspartate 105. Positions 233, 269, 272, 297, 308, 310, and 340 each coordinate Mg(2+).

This sequence belongs to the xylose isomerase family. Homotetramer. Mg(2+) is required as a cofactor.

The protein localises to the cytoplasm. The catalysed reaction is alpha-D-xylose = alpha-D-xylulofuranose. This is Xylose isomerase from Pediococcus pentosaceus (strain ATCC 25745 / CCUG 21536 / LMG 10740 / 183-1w).